A 695-amino-acid polypeptide reads, in one-letter code: Scarecrow-like protein 31 (695 aa).

2 disordered regions span residues 105-136 (VISDSQTQSSIPNNSITTSSSSNSGDYSNSSN) and 234-260 (ISKTRKNHHEREEEEDDLEEARRRSKQ). Residues 113–136 (SSIPNNSITTSSSSNSGDYSNSSN) are compositionally biased toward low complexity. Residues 233–266 (AISKTRKNHHEREEEEDDLEEARRRSKQFAVNEE) adopt a coiled-coil conformation. Residues 306–693 (AKKKSRAVDF…RILFSSSCWV (388 aa)) enclose the GRAS domain. A leucine repeat I (LRI) region spans residues 313–377 (VDFRTLLTLC…EGSTGTMIQS (65 aa)). A VHIID region spans residues 396–461 (YSVFLSASPF…PGLRKLRITG (66 aa)). The short motif at 427–431 (LHIVD) is the VHIID element. Residues 477 to 509 (DTGRRLTEYCKRFGVPFEYNAIASKNWETIKME) are leucine repeat II (LRII). Positions 519 to 614 (LAVNAVLRFK…GEFYGREVMN (96 aa)) are PFYRE. The interval 617–693 (ACEGVDRVER…RILFSSSCWV (77 aa)) is SAW.

It belongs to the GRAS family. Expressed in seedlings, roots, cotyledons, leaves and sepals.

Its subcellular location is the nucleus. Functionally, probable transcription factor involved in plant development. In Arabidopsis thaliana (Mouse-ear cress), this protein is Scarecrow-like protein 31 (SCL31).